Reading from the N-terminus, the 586-residue chain is Major facilitator superfamily domain-containing protein 6-like (586 aa).

The next 2 membrane-spanning stretches (helical) occupy residues 50–70 (ILMG…AFLA) and 78–98 (MFLT…VLVP). Positions 218–237 (GPVNLSKPQGDTQTPDHSSK) are disordered. The span at 223–237 (SKPQGDTQTPDHSSK) shows a compositional bias: polar residues. A run of 9 helical transmembrane segments spans residues 240–260 (PWTF…AAPL), 284–304 (LWVW…ALVG), 318–338 (VIYF…STAF), 365–385 (LILL…VQDF), 397–417 (ELVM…FHPF), 428–448 (VGVL…YAFI), 454–474 (VLPV…AVGA), 494–514 (GHFY…VVLH), and 519–538 (VLYE…FLSI).

The protein belongs to the major facilitator superfamily. MFSD6 family.

Its subcellular location is the membrane. The sequence is that of Major facilitator superfamily domain-containing protein 6-like (Mfsd6l) from Mus musculus (Mouse).